The chain runs to 511 residues: Alpha-amylase 2B (511 aa).

The N-terminal stretch at 1–15 (MKFFLLLFTIGFCWA) is a signal peptide. Gln-16 carries the pyrrolidone carboxylic acid modification. Intrachain disulfides connect Cys-43/Cys-101, Cys-85/Cys-130, and Cys-156/Cys-175. Residues Asn-115, Arg-173, and Asp-182 each coordinate Ca(2+). Arg-210 lines the chloride pocket. The active-site Nucleophile is Asp-212. His-216 provides a ligand contact to Ca(2+). Catalysis depends on Glu-248, which acts as the Proton donor. Residues Asn-313 and Arg-352 each contribute to the chloride site. Intrachain disulfides connect Cys-393–Cys-399 and Cys-465–Cys-477.

It belongs to the glycosyl hydrolase 13 family. As to quaternary structure, monomer. It depends on Ca(2+) as a cofactor. The cofactor is chloride.

The protein localises to the secreted. The enzyme catalyses Endohydrolysis of (1-&gt;4)-alpha-D-glucosidic linkages in polysaccharides containing three or more (1-&gt;4)-alpha-linked D-glucose units.. The chain is Alpha-amylase 2B (AMY2B) from Homo sapiens (Human).